A 175-amino-acid polypeptide reads, in one-letter code: Bifunctional protein PyrR (175 aa).

Substrate contacts are provided by residues 40 to 41, 102 to 110, Arg-135, and Val-159; these read TR and DDVLYTGRT. Positions 98–110 match the PRPP-binding motif; that stretch reads VIIIDDVLYTGRT.

Belongs to the purine/pyrimidine phosphoribosyltransferase family. PyrR subfamily. As to quaternary structure, homodimer and homohexamer; in equilibrium.

It catalyses the reaction UMP + diphosphate = 5-phospho-alpha-D-ribose 1-diphosphate + uracil. Regulates transcriptional attenuation of the pyrimidine nucleotide (pyr) operon by binding in a uridine-dependent manner to specific sites on pyr mRNA. This disrupts an antiterminator hairpin in the RNA and favors formation of a downstream transcription terminator, leading to a reduced expression of downstream genes. Its function is as follows. Also displays a weak uracil phosphoribosyltransferase activity which is not physiologically significant. This chain is Bifunctional protein PyrR, found in Staphylococcus aureus (strain MSSA476).